The following is a 212-amino-acid chain: Protein RER1C (212 aa).

The residue at position 1 (Met1) is an N-acetylmethionine. 4 helical membrane-spanning segments follow: residues 55–75 (TVPH…IYIV), 82–102 (GFYI…IAFL), 135–155 (EFKF…MTFF), and 157–177 (VFDV…LFFL).

It belongs to the RER1 family.

Its subcellular location is the membrane. Involved in the retrieval of endoplasmic reticulum membrane proteins from the early Golgi compartment. The polypeptide is Protein RER1C (RER1C) (Arabidopsis thaliana (Mouse-ear cress)).